The following is a 69-amino-acid chain: Conotoxin Eb6.20 (69 aa).

The N-terminal stretch at 1–17 (VLIIAVLFLTACQLTTA) is a signal peptide. A propeptide spanning residues 18–41 (ETYSRGRQKHRARRSTDKNSKWTR) is cleaved from the precursor. 3 disulfides stabilise this stretch: C43–C57, C50–C61, and C56–C68.

It belongs to the conotoxin O1 superfamily. In terms of tissue distribution, expressed by the venom duct.

It is found in the secreted. The chain is Conotoxin Eb6.20 (E1) from Conus ebraeus (Hebrew cone).